Consider the following 311-residue polypeptide: tRNA dimethylallyltransferase (311 aa).

9-16 contacts ATP; sequence GPTAVGKT. 11-16 contributes to the substrate binding site; it reads TAVGKT. The segment at 34-37 is interaction with substrate tRNA; that stretch reads DSMQ.

This sequence belongs to the IPP transferase family. As to quaternary structure, monomer. Mg(2+) is required as a cofactor.

The catalysed reaction is adenosine(37) in tRNA + dimethylallyl diphosphate = N(6)-dimethylallyladenosine(37) in tRNA + diphosphate. Functionally, catalyzes the transfer of a dimethylallyl group onto the adenine at position 37 in tRNAs that read codons beginning with uridine, leading to the formation of N6-(dimethylallyl)adenosine (i(6)A). The polypeptide is tRNA dimethylallyltransferase (Clostridium botulinum (strain Langeland / NCTC 10281 / Type F)).